Consider the following 485-residue polypeptide: NADH-quinone oxidoreductase subunit N (485 aa).

Helical transmembrane passes span 8 to 28, 35 to 55, 71 to 91, 105 to 125, 127 to 147, 159 to 179, 203 to 223, 235 to 255, 271 to 291, 297 to 317, 326 to 346, 373 to 393, 408 to 430, and 455 to 475; these read LIALLPLLIVGLTVVVVMLSI, FLNATLSVIGLNAALVSLWFV, GFAMLYTGLVLLASLATCTFA, FYLLVLIASLGGILLANANHL, ALFLGIELISLPLFGLIGYAF, YTILSAAASSFLLFGMALVYA, LLAGFGLMIVGLGFKLSLVPF, PAPVSTFLATASKIAIFGVVM, VVLGIIAFASIIFGNLMALSQ, LLGYSSISHLGYLLVALIALQ, VGVYLAGYLFSSLGAFGVVSL, AAVMTVMMLSLAGIPMTLGFI, WWLVAAVVVGSAIGLYYYLRVAV, and IVVLISALLVLVLGVWPQPLI.

The protein belongs to the complex I subunit 2 family. As to quaternary structure, NDH-1 is composed of 13 different subunits. Subunits NuoA, H, J, K, L, M, N constitute the membrane sector of the complex.

It is found in the cell inner membrane. It catalyses the reaction a quinone + NADH + 5 H(+)(in) = a quinol + NAD(+) + 4 H(+)(out). In terms of biological role, NDH-1 shuttles electrons from NADH, via FMN and iron-sulfur (Fe-S) centers, to quinones in the respiratory chain. The immediate electron acceptor for the enzyme in this species is believed to be ubiquinone. Couples the redox reaction to proton translocation (for every two electrons transferred, four hydrogen ions are translocated across the cytoplasmic membrane), and thus conserves the redox energy in a proton gradient. In Salmonella arizonae (strain ATCC BAA-731 / CDC346-86 / RSK2980), this protein is NADH-quinone oxidoreductase subunit N.